The following is a 461-amino-acid chain: uncharacterized protein (461 aa).

The segment covering 1-19 (MEKCSHESGRHSAENDGKY) has biased composition (basic and acidic residues). Residues 1–21 (MEKCSHESGRHSAENDGKYDI) form a disordered region.

It belongs to the CapA family.

Could be involved in the biosynthesis of a cell wall component. This is an uncharacterized protein from Sinorhizobium fredii (strain NBRC 101917 / NGR234).